The primary structure comprises 227 residues: Probable N-acetyltransferase family 8 member 5 (227 aa).

The next 3 helical transmembrane spans lie at 29–49 (IPAA…LFVM), 53–73 (IVLV…LLLL), and 201–221 (ISII…SFPS). The N-acetyltransferase domain occupies 69–213 (FLLLLLRLLA…IKWLITFSII (145 aa)).

This sequence belongs to the camello family.

The protein localises to the membrane. Its function is as follows. May play a role in regulation of gastrulation. The sequence is that of Probable N-acetyltransferase family 8 member 5 from Mus musculus (Mouse).